A 401-amino-acid polypeptide reads, in one-letter code: E3 ubiquitin-protein ligase DA2 (401 aa).

An RING-type; degenerate zinc finger spans residues 59 to 102 (CPICFLYYPSLNRSRCCMKSICTECFLQMKNPNSARPTQCPFCK). Basic and acidic residues predominate over residues 139–153 (KEMQDDEEKMQKRLE). Positions 139–164 (KEMQDDEEKMQKRLESCSSSTSAMTG) are disordered.

Interacts with DA1 (via C-terminus).

The enzyme catalyses S-ubiquitinyl-[E2 ubiquitin-conjugating enzyme]-L-cysteine + [acceptor protein]-L-lysine = [E2 ubiquitin-conjugating enzyme]-L-cysteine + N(6)-ubiquitinyl-[acceptor protein]-L-lysine.. Its pathway is protein modification; protein ubiquitination. In terms of biological role, E3 ubiquitin-protein ligase involved in the regulation of organ and seed size. Acts synergistically with DA1 to regulate seed size. Functions synergistically with DA1 to restrict cell proliferation in the maternal integuments of ovules and developing seeds. Seems to function independently of BB. Possesses E3 ubiquitin-protein ligase activity in vitro. Polyubiquitinates DA1, DAR1 and DAR2, but not DAR3. In Arabidopsis thaliana (Mouse-ear cress), this protein is E3 ubiquitin-protein ligase DA2.